The following is a 311-amino-acid chain: MGLTLLLLLLLGLEGQGIVGSLPEVLQAPVGSSILVQCHYRLQDVKAQKVWCRFLPEGCQPLVSSAVDRRAPAGRRTFLTDLGGGLLQVEMVTLQEEDAGEYGCMVDGARGPQILHRVSLNILPPEEEEETHKIGSLAENAFSDPAGSANPLEPSQDEKSIPLIWGAVLLVGLLVAAVVLFAVMAKRKQGNRLGVCGRFLSSRVSGMNPSSVVHHVSDSGPAAELPLDVPHIRLDSPPSFDNTTYTSLPLDSPSGKPSLPAPSSLPPLPPKVLVCSKPVTYATVIFPGGNKGGGTSCGPAQNPPNNQTPSS.

Residues 1 to 15 (MGLTLLLLLLLGLEG) form the signal peptide. One can recognise an Ig-like V-type domain in the interval 16–121 (QGIVGSLPEV…PQILHRVSLN (106 aa)). At 16–162 (QGIVGSLPEV…EPSQDEKSIP (147 aa)) the chain is on the extracellular side. Intrachain disulfides connect C38–C104 and C52–C59. The chain crosses the membrane as a helical span at residues 163 to 183 (LIWGAVLLVGLLVAAVVLFAV). Over 184 to 311 (MAKRKQGNRL…NPPNNQTPSS (128 aa)) the chain is Cytoplasmic. C196 carries S-palmitoyl cysteine lipidation. Residues 229-263 (VPHIRLDSPPSFDNTTYTSLPLDSPSGKPSLPAPS) are disordered. The span at 239 to 249 (SFDNTTYTSLP) shows a compositional bias: polar residues. Positions 279-284 (VTYATV) match the ITIM motif. The disordered stretch occupies residues 287-311 (PGGNKGGGTSCGPAQNPPNNQTPSS).

As to quaternary structure, when phosphorylated, interacts with PTPN6. When phosphorylated, interacts with PTPN11. In terms of processing, phosphorylated on tyrosine residues. As to expression, detected in platelets, monocytic leukemia and in T-cell leukemia.

It localises to the cell membrane. The protein resides in the cytoplasm. Functionally, cell surface receptor that may play a role in the innate and adaptive immune response. This chain is Trem-like transcript 1 protein (TREML1), found in Homo sapiens (Human).